A 238-amino-acid polypeptide reads, in one-letter code: Aspartate/glutamate leucyltransferase (238 aa).

It belongs to the R-transferase family. Bpt subfamily.

It localises to the cytoplasm. The catalysed reaction is N-terminal L-glutamyl-[protein] + L-leucyl-tRNA(Leu) = N-terminal L-leucyl-L-glutamyl-[protein] + tRNA(Leu) + H(+). It carries out the reaction N-terminal L-aspartyl-[protein] + L-leucyl-tRNA(Leu) = N-terminal L-leucyl-L-aspartyl-[protein] + tRNA(Leu) + H(+). In terms of biological role, functions in the N-end rule pathway of protein degradation where it conjugates Leu from its aminoacyl-tRNA to the N-termini of proteins containing an N-terminal aspartate or glutamate. This chain is Aspartate/glutamate leucyltransferase, found in Aeromonas salmonicida (strain A449).